The following is a 115-amino-acid chain: MTDYSQFPRENILCVDMKSFYASVSAVAMGLNPLTCYLAVVGNTDRQGSVVLAASPALKKDFGIKTGSRLFEIPEDPRIYIVNPQMKLFIRVSTEITKLFYRFVPEKCVHTYSID.

The UmuC domain occupies 12–115 (ILCVDMKSFY…EKCVHTYSID (104 aa)). Residues Asp16 and Asp115 each coordinate Mg(2+).

The protein belongs to the DNA polymerase type-Y family. The cofactor is Mg(2+).

This Bacillus subtilis (strain 168) protein is DNA repair protein homolog YozK (yozK).